A 130-amino-acid polypeptide reads, in one-letter code: Large ribosomal subunit protein bL12 (130 aa).

It belongs to the bacterial ribosomal protein bL12 family. Homodimer. Part of the ribosomal stalk of the 50S ribosomal subunit. Forms a multimeric L10(L12)X complex, where L10 forms an elongated spine to which 2 to 4 L12 dimers bind in a sequential fashion. Binds GTP-bound translation factors.

Forms part of the ribosomal stalk which helps the ribosome interact with GTP-bound translation factors. Is thus essential for accurate translation. The protein is Large ribosomal subunit protein bL12 of Nostoc punctiforme (strain ATCC 29133 / PCC 73102).